A 131-amino-acid polypeptide reads, in one-letter code: Small ribosomal subunit protein uS8 (131 aa).

This sequence belongs to the universal ribosomal protein uS8 family. Part of the 30S ribosomal subunit. Contacts proteins S5 and S12.

Functionally, one of the primary rRNA binding proteins, it binds directly to 16S rRNA central domain where it helps coordinate assembly of the platform of the 30S subunit. The sequence is that of Small ribosomal subunit protein uS8 from Neorickettsia sennetsu (strain ATCC VR-367 / Miyayama) (Ehrlichia sennetsu).